The primary structure comprises 451 residues: Trigger factor (451 aa).

Positions 171-256 constitute a PPIase FKBP-type domain; it reads GDRVKVNFKG…ATAIEAPEDK (86 aa).

Belongs to the FKBP-type PPIase family. Tig subfamily.

The protein localises to the cytoplasm. It carries out the reaction [protein]-peptidylproline (omega=180) = [protein]-peptidylproline (omega=0). In terms of biological role, involved in protein export. Acts as a chaperone by maintaining the newly synthesized protein in an open conformation. Functions as a peptidyl-prolyl cis-trans isomerase. This Bradyrhizobium sp. (strain ORS 278) protein is Trigger factor.